The sequence spans 410 residues: D-amino acid dehydrogenase (410 aa).

An FAD-binding site is contributed by 9-14; that stretch reads GGGIVG.

The protein belongs to the DadA oxidoreductase family. FAD is required as a cofactor.

The protein localises to the cell inner membrane. The enzyme catalyses a D-alpha-amino acid + a quinone + H2O = a 2-oxocarboxylate + a quinol + NH4(+). Functionally, catalyzes the oxidative deamination of D-amino acids. Has broad substrate specificity; is mostly active on D-proline, and to a lesser extent, on several other D-amino acids such as D-alanine, D-phenylalanine and D-serine. Mediates electron transport from D-proline to coenzyme Q1 in vitro, and is involved in the electron transport chain from D-proline to the c-type cytochrome in vivo. This is D-amino acid dehydrogenase from Helicobacter pylori (strain ATCC 700392 / 26695) (Campylobacter pylori).